The primary structure comprises 243 residues: Methylthioribulose-1-phosphate dehydratase (243 aa).

Cys-90 is a substrate binding site. Positions 108 and 110 each coordinate Zn(2+). Glu-131 serves as the catalytic Proton donor/acceptor. A Zn(2+)-binding site is contributed by His-193.

Belongs to the aldolase class II family. MtnB subfamily. Requires Zn(2+) as cofactor.

It localises to the cytoplasm. It catalyses the reaction 5-(methylsulfanyl)-D-ribulose 1-phosphate = 5-methylsulfanyl-2,3-dioxopentyl phosphate + H2O. It participates in amino-acid biosynthesis; L-methionine biosynthesis via salvage pathway; L-methionine from S-methyl-5-thio-alpha-D-ribose 1-phosphate: step 2/6. Functionally, catalyzes the dehydration of methylthioribulose-1-phosphate (MTRu-1-P) into 2,3-diketo-5-methylthiopentyl-1-phosphate (DK-MTP-1-P). The chain is Methylthioribulose-1-phosphate dehydratase from Zygosaccharomyces rouxii (strain ATCC 2623 / CBS 732 / NBRC 1130 / NCYC 568 / NRRL Y-229).